The chain runs to 580 residues: Negative elongation factor B (580 aa).

Lys519 bears the N6-acetyllysine mark. Residues 548–580 (LEQLDHRKPSPAQAAETPALELPLPSVPAPAPL) are disordered. Ser557 carries the phosphoserine modification.

Belongs to the NELF-B family. In terms of assembly, the NELF complex is composed of NELFA, NELFB, NELFCD (isoform NELF-C or isoform NELF-D) and NELFE; the N-terminus of NELFB binds to the NELFA:NELFCD subcomplex. Binds RNA which may help to stabilize the NELF complex on nucleic acid. Interacts with the first BRCT repeat of BRCA1. Interacts with KIAA1191. Interacts with NELFE. In terms of tissue distribution, widely expressed. Expressed in heart, brain, lung, placenta, liver, skeletal muscle, kidney and pancreas.

The protein localises to the nucleus. Its function is as follows. Essential component of the NELF complex, a complex that negatively regulates the elongation of transcription by RNA polymerase II. The NELF complex, which acts via an association with the DSIF complex and causes transcriptional pausing, is counteracted by the P-TEFb kinase complex. May be able to induce chromatin unfolding. Essential for early embryogenesis; plays an important role in maintaining the undifferentiated state of embryonic stem cells (ESCs) by preventing unscheduled expression of developmental genes. Plays a key role in establishing the responsiveness of stem cells to developmental cues; facilitates plasticity and cell fate commitment in ESCs by establishing the appropriate expression level of signaling molecules. Supports the transcription of genes involved in energy metabolism in cardiomyocytes; facilitates the association of transcription initiation factors with the promoters of the metabolism-related genes. Functionally, (Microbial infection) The NELF complex is involved in HIV-1 latency possibly involving recruitment of PCF11 to paused RNA polymerase II. In vitro, binds weakly to the HIV-1 TAR RNA which is located in the long terminal repeat (LTR) of HIV-1. The polypeptide is Negative elongation factor B (NELFB) (Homo sapiens (Human)).